The sequence spans 314 residues: Carbamate kinase (314 aa).

It belongs to the carbamate kinase family. As to quaternary structure, homodimer.

The protein resides in the cytoplasm. It carries out the reaction hydrogencarbonate + NH4(+) + ATP = carbamoyl phosphate + ADP + H2O + H(+). Functionally, carbamate kinase that plays a biosynthetic role in that it produces carbamoyl-phosphate. This is Carbamate kinase (cpkA) from Pyrococcus furiosus (strain ATCC 43587 / DSM 3638 / JCM 8422 / Vc1).